A 448-amino-acid chain; its full sequence is Omega-6 fatty acid desaturase, chloroplastic (448 aa).

The N-terminal 69 residues, 1-69 (MASRIADSLF…VKRRIGCIKA (69 aa)), are a transit peptide targeting the chloroplast. Val-70 is subject to N-acetylvaline. Helical transmembrane passes span 124–144 (LKALKSVLISVTSYTLGLFMI) and 149–169 (WYLLPLAWAWTGTAITGFFVI). A Histidine box-1 motif is present at residues 171-175 (HDCAH). Residues 207–211 (HDRHH) carry the Histidine box-2 motif. The next 2 membrane-spanning stretches (helical) occupy residues 282-302 (VFAFMAVGWPLIVYKVGILGW) and 303-323 (VKFWLMPWLGYHFWMSTFTMV). A Histidine box-3 motif is present at residues 367–371 (HIPHH).

The protein belongs to the fatty acid desaturase type 1 family.

It localises to the plastid. The protein resides in the chloroplast inner membrane. It carries out the reaction a (9Z)-octadecenoyl-containing glycerolipid + 2 reduced [2Fe-2S]-[ferredoxin] + O2 + 2 H(+) = a (9Z,12Z)-octadecadienoyl-containing glycerolipid + 2 oxidized [2Fe-2S]-[ferredoxin] + 2 H2O. It participates in lipid metabolism; polyunsaturated fatty acid biosynthesis. In terms of biological role, chloroplast omega-6 fatty acid desaturase introduces the second double bond in the biosynthesis of 16:3 and 18:3 fatty acids, important constituents of plant membranes. It is thought to use ferredoxin as an electron donor and to act on fatty acids esterified to galactolipids, sulfolipids and phosphatidylglycerol. This Arabidopsis thaliana (Mouse-ear cress) protein is Omega-6 fatty acid desaturase, chloroplastic.